We begin with the raw amino-acid sequence, 428 residues long: Serine--tRNA ligase (428 aa).

231–233 (TAE) is a binding site for L-serine. ATP-binding positions include 262–264 (RRE) and Val-278. An L-serine-binding site is contributed by Glu-285. 349 to 352 (EVSS) lines the ATP pocket. Ser-384 is a binding site for L-serine.

This sequence belongs to the class-II aminoacyl-tRNA synthetase family. Type-1 seryl-tRNA synthetase subfamily. In terms of assembly, homodimer. The tRNA molecule binds across the dimer.

Its subcellular location is the cytoplasm. It carries out the reaction tRNA(Ser) + L-serine + ATP = L-seryl-tRNA(Ser) + AMP + diphosphate + H(+). It catalyses the reaction tRNA(Sec) + L-serine + ATP = L-seryl-tRNA(Sec) + AMP + diphosphate + H(+). Its pathway is aminoacyl-tRNA biosynthesis; selenocysteinyl-tRNA(Sec) biosynthesis; L-seryl-tRNA(Sec) from L-serine and tRNA(Sec): step 1/1. Catalyzes the attachment of serine to tRNA(Ser). Is also able to aminoacylate tRNA(Sec) with serine, to form the misacylated tRNA L-seryl-tRNA(Sec), which will be further converted into selenocysteinyl-tRNA(Sec). In Chlamydia trachomatis serovar L2 (strain ATCC VR-902B / DSM 19102 / 434/Bu), this protein is Serine--tRNA ligase.